The chain runs to 443 residues: Glucose-6-phosphate isomerase (443 aa).

Catalysis depends on Glu-285, which acts as the Proton donor. Residues His-306 and Lys-420 contribute to the active site.

Belongs to the GPI family.

It localises to the cytoplasm. The enzyme catalyses alpha-D-glucose 6-phosphate = beta-D-fructose 6-phosphate. It participates in carbohydrate biosynthesis; gluconeogenesis. The protein operates within carbohydrate degradation; glycolysis; D-glyceraldehyde 3-phosphate and glycerone phosphate from D-glucose: step 2/4. In terms of biological role, catalyzes the reversible isomerization of glucose-6-phosphate to fructose-6-phosphate. The polypeptide is Glucose-6-phosphate isomerase (Staphylococcus aureus (strain USA300)).